We begin with the raw amino-acid sequence, 356 residues long: Phosphate acyltransferase (356 aa).

It belongs to the PlsX family. In terms of assembly, homodimer. Probably interacts with PlsY.

It is found in the cytoplasm. It carries out the reaction a fatty acyl-[ACP] + phosphate = an acyl phosphate + holo-[ACP]. It functions in the pathway lipid metabolism; phospholipid metabolism. Functionally, catalyzes the reversible formation of acyl-phosphate (acyl-PO(4)) from acyl-[acyl-carrier-protein] (acyl-ACP). This enzyme utilizes acyl-ACP as fatty acyl donor, but not acyl-CoA. The protein is Phosphate acyltransferase of Stutzerimonas stutzeri (strain A1501) (Pseudomonas stutzeri).